The following is a 247-amino-acid chain: UDP-2,3-diacylglucosamine hydrolase (247 aa).

5 residues coordinate Mn(2+): aspartate 8, histidine 10, aspartate 41, asparagine 79, and histidine 114. 79–80 (NR) is a binding site for substrate. Substrate is bound by residues aspartate 122, serine 160, aspartate 171, glutamine 174, and histidine 202. Mn(2+) contacts are provided by histidine 202 and histidine 204.

The protein belongs to the LpxH family. The cofactor is Mn(2+).

Its subcellular location is the cell inner membrane. The catalysed reaction is UDP-2-N,3-O-bis[(3R)-3-hydroxytetradecanoyl]-alpha-D-glucosamine + H2O = 2-N,3-O-bis[(3R)-3-hydroxytetradecanoyl]-alpha-D-glucosaminyl 1-phosphate + UMP + 2 H(+). Its pathway is glycolipid biosynthesis; lipid IV(A) biosynthesis; lipid IV(A) from (3R)-3-hydroxytetradecanoyl-[acyl-carrier-protein] and UDP-N-acetyl-alpha-D-glucosamine: step 4/6. Hydrolyzes the pyrophosphate bond of UDP-2,3-diacylglucosamine to yield 2,3-diacylglucosamine 1-phosphate (lipid X) and UMP by catalyzing the attack of water at the alpha-P atom. Involved in the biosynthesis of lipid A, a phosphorylated glycolipid that anchors the lipopolysaccharide to the outer membrane of the cell. This is UDP-2,3-diacylglucosamine hydrolase from Xanthomonas campestris pv. campestris (strain 8004).